A 99-amino-acid chain; its full sequence is Large ribosomal subunit protein bL28 (99 aa).

This sequence belongs to the bacterial ribosomal protein bL28 family.

The sequence is that of Large ribosomal subunit protein bL28 from Rhodospirillum rubrum (strain ATCC 11170 / ATH 1.1.1 / DSM 467 / LMG 4362 / NCIMB 8255 / S1).